The following is a 166-amino-acid chain: CDP-archaeol synthase (166 aa).

The next 5 membrane-spanning stretches (helical) occupy residues 7 to 27, 55 to 75, 78 to 98, 116 to 136, and 138 to 158; these read LLLS…GPFI, LIVA…FFTA, TLIS…GAFI, LDFV…ITWY, and FLFI…VAYL.

The protein belongs to the CDP-archaeol synthase family. It depends on Mg(2+) as a cofactor.

The protein localises to the cell membrane. It carries out the reaction 2,3-bis-O-(geranylgeranyl)-sn-glycerol 1-phosphate + CTP + H(+) = CDP-2,3-bis-O-(geranylgeranyl)-sn-glycerol + diphosphate. Its pathway is membrane lipid metabolism; glycerophospholipid metabolism. In terms of biological role, catalyzes the formation of CDP-2,3-bis-(O-geranylgeranyl)-sn-glycerol (CDP-archaeol) from 2,3-bis-(O-geranylgeranyl)-sn-glycerol 1-phosphate (DGGGP) and CTP. This reaction is the third ether-bond-formation step in the biosynthesis of archaeal membrane lipids. In Saccharolobus islandicus (strain Y.N.15.51 / Yellowstone #2) (Sulfolobus islandicus), this protein is CDP-archaeol synthase.